Consider the following 200-residue polypeptide: UPF0637 protein LCABL_14170 (200 aa).

This sequence belongs to the UPF0637 family.

This Lacticaseibacillus casei (strain BL23) (Lactobacillus casei) protein is UPF0637 protein LCABL_14170.